Consider the following 98-residue polypeptide: MSGTSPTPSNVVLVGKKPVMNYVLAALTLLNQGVPEIIIKARGRAISKAVDTVEIVRNRFLPDKIEIRAIGVGSQVVTSQDGRQSRVSTIEISIKKKA.

N6-acetyllysine is present on Lys16.

It belongs to the histone-like Alba family. Post-translationally, acetylated. Acetylation at Lys-16 decreases DNA-binding affinity.

The protein localises to the cytoplasm. Its subcellular location is the chromosome. Functionally, binds double-stranded DNA tightly but without sequence specificity. Involved in DNA compaction. The sequence is that of DNA/RNA-binding protein Alba from Metallosphaera sedula (strain ATCC 51363 / DSM 5348 / JCM 9185 / NBRC 15509 / TH2).